The chain runs to 620 residues: MDSLSSMGFQTASFFLILLFLFYHLPCVPSQQERSRLCKPFQCGDITVGFPFWGENRQSDCGHFSLKLNCNKPSNTTSLTISGHNYSVLHIDNKSNILSLSRQDFSGPFCSASFSSTPLRSDLFQNLQPYRNLTVFYMCDPRRHFFGNFTCPVKGLGSVVQNSTYRKLCDKSFSVTVPTSYVPEEEALNLTHLESVLRKGLEVKLKISEMSGQECVTTDGNSGFTRFCCTNVSGPEISCLTSITTMNNGTYSDNRPFLVTIGTVLGSILCVCVVLFLAFYLNERRIAKAARIQHLEALGTLRGYNYKQIKKITKSFTEVVGRGGFGTVYRGRLRDGRKVAVKVLKDSKGNCEDFINEVASMSQTSHVNIVTLLGFCYEGSKRAIIYEFLENGSLDQSLNLDVSTLYGIALGVARGLEYLHYGCKTRIVHFDIKPQNVLLDENLRPKVADFGLAKLCEKQESILSLLDTRGTIGYIAPELFSRMYGSVSHKSDVYSYGMLVLEMIGARNKERVQNADPNNSSAYFPDWIYKDLENFDNTRLLGDGLTREEEKNAKKMILVGLWCIQFRPSDRPSMNKVVEMMEGSLDSLDPPPKPLLHMPMQNNNAESSQLSVESSIYSEV.

A signal peptide spans 1–30 (MDSLSSMGFQTASFFLILLFLFYHLPCVPS). The Extracellular segment spans residues 31 to 256 (QQERSRLCKP…NNGTYSDNRP (226 aa)). Residues Asn-75, Asn-85, Asn-93, Asn-132, Asn-148, Asn-162, Asn-189, Asn-231, and Asn-248 are each glycosylated (N-linked (GlcNAc...) asparagine). Residues 257 to 277 (FLVTIGTVLGSILCVCVVLFL) traverse the membrane as a helical segment. Residues 278 to 620 (AFYLNERRIA…SVESSIYSEV (343 aa)) lie on the Cytoplasmic side of the membrane. The 283-residue stretch at 314–596 (KSFTEVVGRG…SLDPPPKPLL (283 aa)) folds into the Protein kinase domain. ATP is bound by residues 320–328 (VGRGGFGTV) and Lys-342. Asp-431 functions as the Proton acceptor in the catalytic mechanism. Residues 586–620 (DSLDPPPKPLLHMPMQNNNAESSQLSVESSIYSEV) are disordered. The span at 600–620 (MQNNNAESSQLSVESSIYSEV) shows a compositional bias: polar residues.

The protein belongs to the protein kinase superfamily. Ser/Thr protein kinase family.

The protein resides in the membrane. It catalyses the reaction L-seryl-[protein] + ATP = O-phospho-L-seryl-[protein] + ADP + H(+). It carries out the reaction L-threonyl-[protein] + ATP = O-phospho-L-threonyl-[protein] + ADP + H(+). The chain is LEAF RUST 10 DISEASE-RESISTANCE LOCUS RECEPTOR-LIKE PROTEIN KINASE-like 2.3 from Arabidopsis thaliana (Mouse-ear cress).